The primary structure comprises 175 residues: Regenerating islet-derived protein 3-alpha (175 aa).

Positions 1–26 (MLPHLVLNSISWMLLSCLLFVFQVQG) are cleaved as a signal peptide. Positions 27-37 (EDFQKEVPSPR) are excised as a propeptide. 3 cysteine pairs are disulfide-bonded: C40–C51, C68–C171, and C146–C163. The C-type lectin domain maps to 47 to 172 (YRSHCYALVM…CDGTLPFVCK (126 aa)). Zn(2+) is bound by residues H50, H107, E121, and H145. Residues 103-118 (WIGLHDPTMGQQPNGG) form a sufficient to activate EXTL3 region.

Forms a hexameric membrane-permeabilizing oligomeric pore on membrane phospholipids. The hexamer is formed by three dimers related by helical symmetry. Forms filaments, filamentation traps pore complexes and limits damage to host cells. Interacts with EXTL3. Proteolytic processing by trypsin removes an inhibitory N-terminal propeptide and is essential for peptidoglycan binding and antibacterial activity. As to expression, small intestine and pancreas.

The protein localises to the secreted. Its function is as follows. Bactericidal C-type lectin. The lack of the EPN motif may explain its inability to bind peptidoglycan. In terms of biological role, acts as a hormone in response to different stimuli like anti-inflammatory signals, such as IL17A, or gut microbiome. Secreted by different cell types to activate its receptor EXTL3 and induce cell specific signaling pathways. Induced by IL17A in keratinocytes, regulates keratinocyte proliferation and differentiation after skin injury via activation of EXTL3-PI3K-AKT signaling pathway. In parallel, inhibits skin inflammation through the inhibition of inflammatory cytokines such as IL6 and TNF. In pancreas, is able to permealize beta-cells membrane and stimulate their proliferation. In Mus musculus (Mouse), this protein is Regenerating islet-derived protein 3-alpha (Reg3a).